Consider the following 419-residue polypeptide: Mitogen-activated protein kinase spm1 (419 aa).

In terms of domain architecture, Protein kinase spans 23-314 (YTVTKELGQG…VEEALEHPYL (292 aa)). ATP is bound by residues 29 to 37 (LGQGAYGIV) and lysine 52. Aspartate 149 functions as the Proton acceptor in the catalytic mechanism.

It belongs to the protein kinase superfamily. Ser/Thr protein kinase family. MAP kinase subfamily. The cofactor is Mg(2+). In terms of processing, phosphorylated by the MAP kinase kinase mkk1.

The enzyme catalyses L-seryl-[protein] + ATP = O-phospho-L-seryl-[protein] + ADP + H(+). It catalyses the reaction L-threonyl-[protein] + ATP = O-phospho-L-threonyl-[protein] + ADP + H(+). Functionally, mitogen-activated protein kinase, part of the mkh1-mkk1-spm1 MAPK cascade that regulates vegetative growth, conidial formation, colony surface hydrophobicity, osmotic stress, cell wall integrity maintenance, carbon and nitrogen source utilization, chitin distribution, septa formation, and pathogenicity. The polypeptide is Mitogen-activated protein kinase spm1 (Cytospora mali (Apple Valsa canker fungus)).